Reading from the N-terminus, the 279-residue chain is uncharacterized protein (279 aa).

Residues 60–92 form a disordered region; sequence RKANKLNNKQDSTFFNSASGETNNTILPPGVKN. Over residues 70–85 the composition is skewed to polar residues; the sequence is DSTFFNSASGETNNTI. Transmembrane regions (helical) follow at residues 156 to 176, 202 to 222, and 237 to 257; these read IVGYTNLVIVAFFAGLLAVMN, ISIFVISIVTLPFWTMFILFL, and FIWIVLIINVVLLLVSCLLMI.

It is found in the cell membrane. This is an uncharacterized protein from Mycoplasma genitalium (strain ATCC 33530 / DSM 19775 / NCTC 10195 / G37) (Mycoplasmoides genitalium).